Reading from the N-terminus, the 126-residue chain is UPF0102 protein MXAN_3551 (126 aa).

This sequence belongs to the UPF0102 family.

In Myxococcus xanthus (strain DK1622), this protein is UPF0102 protein MXAN_3551.